A 144-amino-acid chain; its full sequence is MKLNDLSPAPGSRREKHRPGRGIGSGLGKTGGRGHKGQTSRSGGSIAPGFEGGQQPLHRRLPKFGFVSLKAMDRAEVRLSELAKVEGDLITVQSLKDANVIGQHVQRVKIMLSGEVTRAVTLKGIAVTKGARAAIEAAGGKFEE.

Residues 1-57 form a disordered region; it reads MKLNDLSPAPGSRREKHRPGRGIGSGLGKTGGRGHKGQTSRSGGSIAPGFEGGQQPL. The span at 21–31 shows a compositional bias: gly residues; the sequence is RGIGSGLGKTG.

The protein belongs to the universal ribosomal protein uL15 family. In terms of assembly, part of the 50S ribosomal subunit.

Its function is as follows. Binds to the 23S rRNA. The sequence is that of Large ribosomal subunit protein uL15 from Pseudomonas entomophila (strain L48).